The following is a 422-amino-acid chain: Cytochrome P450-pinF1, plant-inducible (422 aa).

Heme is bound at residue Cys-369.

The protein belongs to the cytochrome P450 family. Heme serves as cofactor.

Not essential for virulence, but may be involved in the detoxification of plant protective agents at the site of wounding. The polypeptide is Cytochrome P450-pinF1, plant-inducible (cyp103) (Rhizobium radiobacter (Agrobacterium tumefaciens)).